A 202-amino-acid chain; its full sequence is LexA repressor (202 aa).

The H-T-H motif DNA-binding region spans 28–48 (RAEIAMRLGFRSPNAAEEHLK). Active-site for autocatalytic cleavage activity residues include Ser-119 and Lys-156.

It belongs to the peptidase S24 family. Homodimer.

It carries out the reaction Hydrolysis of Ala-|-Gly bond in repressor LexA.. In terms of biological role, represses a number of genes involved in the response to DNA damage (SOS response), including recA and lexA. Binds to the 16 bp palindromic sequence 5'-CTGTATATATATACAG-3'. In the presence of single-stranded DNA, RecA interacts with LexA causing an autocatalytic cleavage which disrupts the DNA-binding part of LexA, leading to derepression of the SOS regulon and eventually DNA repair. In Serratia proteamaculans (strain 568), this protein is LexA repressor.